The primary structure comprises 1685 residues: Collagen alpha-5(IV) chain (1685 aa).

The signal sequence occupies residues 1 to 26; the sequence is MKLRGVSLAAGLFLLALSLWGQPAEA. The interval 27-41 is nonhelical region (NC2); that stretch reads AACYGCSPGSKCDCS. Residues 42–1456 are triple-helical region; it reads GIKGEKGERG…QGPPGPPGTS (1415 aa). A disordered region spans residues 49 to 1459; that stretch reads ERGFPGLEGH…PGPPGTSSVA (1411 aa). A compositionally biased stretch (low complexity) spans 52 to 61; sequence FPGLEGHPGL. Residues 62–73 are compositionally biased toward pro residues; the sequence is PGFPGPEGPPGP. N-linked (GlcNAc...) asparagine glycosylation is present at Asn-125. The segment covering 188 to 212 has biased composition (pro residues); sequence TGIPGPIGPPGPPGLMGPPGPPGLP. Over residues 214 to 225 the composition is skewed to low complexity; the sequence is PKGNMGLNFQGP. Residues 246 to 257 are compositionally biased toward basic and acidic residues; sequence EQKRPIDVEFQK. Residues 266–281 show a composition bias toward pro residues; the sequence is RGPPGPPGIRGPPGPP. Basic and acidic residues-rich tracts occupy residues 284-305 and 324-333; these read EKGE…KDGE and PGRDGEKGQK. The span at 413–430 shows a compositional bias: low complexity; the sequence is PPGISIPGPPGLDGQPGA. Composition is skewed to pro residues over residues 431 to 445, 493 to 505, 620 to 630, and 709 to 727; these read PGLP…PHIP, PGQP…PGPP, MGPPGFGPPGP, and PGPP…PGAP. Positions 788-797 are enriched in low complexity; it reads RTGLDGLPGP. Pro residues-rich tracts occupy residues 848–859 and 868–880; these read PGPPGLDVPGPP and PGAP…PGSP. 5 stretches are compositionally biased toward low complexity: residues 882–901, 912–931, 983–999, 1010–1026, and 1111–1120; these read LPGK…MGMM, IPGR…QGQP, YQGL…SGQP, NPGL…PGLK, and TPGAKGQPGL. Residues 1139-1148 show a composition bias toward pro residues; the sequence is PGNPGLPGEP. 2 stretches are compositionally biased toward gly residues: residues 1149–1158 and 1202–1211; these read GPVGGGGHPG and GQKGDGGLPG. Pro residues-rich tracts occupy residues 1234–1243 and 1256–1274; these read QGPPGPPGSP and PQGP…PPGL. Positions 1295–1308 are enriched in low complexity; the sequence is LPGLKGDQGPPGLQ. Residues 1353 to 1362 show a composition bias toward pro residues; sequence IGPPGPPGLP. In terms of domain architecture, Collagen IV NC1 spans 1461–1685; it reads GFLITRHSQT…SRCQVCMKRT (225 aa). Disulfide bonds link Cys-1476-Cys-1567, Cys-1509-Cys-1564, Cys-1521-Cys-1527, Cys-1586-Cys-1681, Cys-1620-Cys-1678, and Cys-1632-Cys-1638. Residue Met-1549 forms an S-Lysyl-methionine sulfilimine (Met-Lys) (interchain with K-1667) linkage. Lys-1667 participates in a covalent cross-link: S-Lysyl-methionine sulfilimine (Lys-Met) (interchain with M-1549).

It belongs to the type IV collagen family. As to quaternary structure, there are six type IV collagen isoforms, alpha 1(IV)-alpha 6(IV), each of which can form a triple helix structure with 2 other chains to generate type IV collagen network. Prolines at the third position of the tripeptide repeating unit (G-X-Y) are hydroxylated in some or all of the chains. In terms of processing, type IV collagens contain numerous cysteine residues which are involved in inter- and intramolecular disulfide bonding. 12 of these, located in the NC1 domain, are conserved in all known type IV collagens. Post-translationally, the trimeric structure of the NC1 domains is stabilized by covalent bonds between Lys and Met residues. In terms of tissue distribution, isoform 2 is found in kidney.

The protein localises to the secreted. It is found in the extracellular space. The protein resides in the extracellular matrix. It localises to the basement membrane. Its function is as follows. Type IV collagen is the major structural component of glomerular basement membranes (GBM), forming a 'chicken-wire' meshwork together with laminins, proteoglycans and entactin/nidogen. This is Collagen alpha-5(IV) chain (COL4A5) from Homo sapiens (Human).